Consider the following 1369-residue polypeptide: Phospholipase D1 (1369 aa).

2 disordered regions span residues 27–90 (YSEK…SSWH) and 318–340 (ESHS…GRKK). The segment covering 31-53 (GTGRKDAEDHTPSKITDLEKNVD) has biased composition (basic and acidic residues). A PX domain is found at 208–379 (TDLIKVSVLD…NVLYSFLEFS (172 aa)). PLD phosphodiesterase domains are found at residues 641 to 668 (LFWA…CFGR) and 941 to 968 (EMIY…NERS). Over residues 1277–1289 (HETHEKSENDPKN) the composition is skewed to basic and acidic residues. The segment at 1277 to 1320 (HETHEKSENDPKNPKAGSQGSGNTSASEDSKTEKPKTRTNNGLQ) is disordered. Polar residues predominate over residues 1292 to 1303 (AGSQGSGNTSAS).

It belongs to the phospholipase D family.

Its subcellular location is the cytoplasm. The catalysed reaction is a 1,2-diacyl-sn-glycero-3-phosphocholine + H2O = a 1,2-diacyl-sn-glycero-3-phosphate + choline + H(+). With respect to regulation, activity is slightly stimulated by oleate. In terms of biological role, required for meiosis and spore formation. Seems to be involved in the coordinate induction of late meiotic events. In Schizosaccharomyces pombe (strain 972 / ATCC 24843) (Fission yeast), this protein is Phospholipase D1 (pld1).